Reading from the N-terminus, the 342-residue chain is Protein pelota homolog (342 aa).

Belongs to the eukaryotic release factor 1 family. Pelota subfamily. As to quaternary structure, monomer. A divalent metal cation serves as cofactor.

Its subcellular location is the cytoplasm. May function in recognizing stalled ribosomes, interact with stem-loop structures in stalled mRNA molecules, and effect endonucleolytic cleavage of the mRNA. May play a role in the release non-functional ribosomes and degradation of damaged mRNAs. Has endoribonuclease activity. The polypeptide is Protein pelota homolog (Sulfolobus acidocaldarius (strain ATCC 33909 / DSM 639 / JCM 8929 / NBRC 15157 / NCIMB 11770)).